Here is a 316-residue protein sequence, read N- to C-terminus: Small neutral protease regulatory protein (316 aa).

The region spanning 1–56 is the HTH lysR-type domain; sequence MRHLRALCAIADTGSVRRAARELGVSQPALTTQLRRIEQSLGAELFHRGRDGCRPT. Positions 16 to 35 form a DNA-binding region, H-T-H motif; it reads VRRAARELGVSQPALTTQLR.

This sequence belongs to the LysR transcriptional regulatory family.

Functionally, transcriptional trans-activator of the gene (mprA) for the small neutral protease. In Streptomyces coelicolor, this protein is Small neutral protease regulatory protein (mprR).